The primary structure comprises 534 residues: NAD(P)H-quinone oxidoreductase subunit 2 (534 aa).

A run of 14 helical transmembrane segments spans residues 15-35 (ILPE…DLIL), 42-62 (WIGY…YFQW), 79-99 (LSIV…LMSI), 109-129 (LAEF…LSGA), 132-152 (LVMI…LTGY), 167-187 (LLIG…LYGL), 210-230 (LGLV…ISAA), 244-264 (PTPV…ALAI), 280-300 (FVFT…ALAQ), 306-326 (MLAY…IAGT), 334-354 (IFYL…IILF), 378-398 (LGLS…GFFG), 410-432 (GLYW…YIRV), and 466-486 (VGLV…NPLF).

It belongs to the complex I subunit 2 family. NDH-1 can be composed of about 15 different subunits; different subcomplexes with different compositions have been identified which probably have different functions.

It is found in the cellular thylakoid membrane. The enzyme catalyses a plastoquinone + NADH + (n+1) H(+)(in) = a plastoquinol + NAD(+) + n H(+)(out). The catalysed reaction is a plastoquinone + NADPH + (n+1) H(+)(in) = a plastoquinol + NADP(+) + n H(+)(out). Functionally, NDH-1 shuttles electrons from an unknown electron donor, via FMN and iron-sulfur (Fe-S) centers, to quinones in the respiratory and/or the photosynthetic chain. The immediate electron acceptor for the enzyme in this species is believed to be plastoquinone. Couples the redox reaction to proton translocation, and thus conserves the redox energy in a proton gradient. Cyanobacterial NDH-1 also plays a role in inorganic carbon-concentration. This Nostoc punctiforme (strain ATCC 29133 / PCC 73102) protein is NAD(P)H-quinone oxidoreductase subunit 2.